The following is a 227-amino-acid chain: UPF0173 metal-dependent hydrolase Bcer98_3294 (227 aa).

Belongs to the UPF0173 family.

The sequence is that of UPF0173 metal-dependent hydrolase Bcer98_3294 from Bacillus cytotoxicus (strain DSM 22905 / CIP 110041 / 391-98 / NVH 391-98).